A 420-amino-acid polypeptide reads, in one-letter code: UDP-N-acetylglucosamine 1-carboxyvinyltransferase (420 aa).

22–23 (KN) contributes to the phosphoenolpyruvate binding site. Position 93 (Arg93) interacts with UDP-N-acetyl-alpha-D-glucosamine. Residue Cys117 is the Proton donor of the active site. Cys117 carries the post-translational modification 2-(S-cysteinyl)pyruvic acid O-phosphothioketal. UDP-N-acetyl-alpha-D-glucosamine is bound by residues Asp307 and Ile329.

It belongs to the EPSP synthase family. MurA subfamily.

Its subcellular location is the cytoplasm. The enzyme catalyses phosphoenolpyruvate + UDP-N-acetyl-alpha-D-glucosamine = UDP-N-acetyl-3-O-(1-carboxyvinyl)-alpha-D-glucosamine + phosphate. It participates in cell wall biogenesis; peptidoglycan biosynthesis. Functionally, cell wall formation. Adds enolpyruvyl to UDP-N-acetylglucosamine. The sequence is that of UDP-N-acetylglucosamine 1-carboxyvinyltransferase from Cellvibrio japonicus (strain Ueda107) (Pseudomonas fluorescens subsp. cellulosa).